A 384-amino-acid polypeptide reads, in one-letter code: Gibberellin 3-beta-dioxygenase 1 (384 aa).

One can recognise a Fe2OG dioxygenase domain in the interval Thr225 to Pro327. Fe cation contacts are provided by His250, Asp252, and His308. Positions 318 and 320 each coordinate 2-oxoglutarate.

Belongs to the iron/ascorbate-dependent oxidoreductase family. L-ascorbate serves as cofactor. It depends on Fe(2+) as a cofactor. As to expression, expressed in unopened flowers.

It carries out the reaction gibberellin A20 + 2-oxoglutarate + O2 = gibberellin A1 + succinate + CO2. It functions in the pathway plant hormone biosynthesis; gibberellin biosynthesis. In terms of biological role, catalyzes the 3-beta-hydroxylation of the inactive gibberellin precursors, leading to the formation of bioactive gibberellins. In vitro, converts the precursors GA20, GA5, GA44 and GA9 to the corresponding 3-beta-hydroxylated bioactive products GA1, GA3, GA38 and GA4, respectively. Involved in the production of bioactive GA for vegetative growth and development. May possess 2,3-desaturase activity, catalyzing the conversion of GA9 to 2,3-dehydro-GA9, and GA20 to GA5 (2,3-dehydro GA20). May possess 2-beta-hydroxylase activity, catalyzing the conversion of GA1 and GA4 to the corresponding 2-beta-hydroxylated products GA8 and GA34, respectively. The protein is Gibberellin 3-beta-dioxygenase 1 of Oryza sativa subsp. japonica (Rice).